The primary structure comprises 538 residues: Cytochrome P450 monooxygenase claO (538 aa).

A run of 2 helical transmembrane segments spans residues 7–27 and 222–242; these read IGAFNILVFLIFLWLLSKLVG and INPSYFSMVIFLLALVFPILL. Residue Cys475 coordinates heme.

This sequence belongs to the cytochrome P450 family. The cofactor is heme.

It localises to the membrane. Its pathway is secondary metabolite biosynthesis; terpenoid biosynthesis. Cytochrome P450 monooxygenase; part of the gene cluster that mediates the biosynthesis of clavilactone A, a meroterpenoid that features a unique benzo-fused ten-membered carbocyclic ring unit with an alpha,beta-epoxy-gamma-lactone moiety, forming an intriguing 10/5/3 tricyclic nested skeleton. Cytochrome P450 monooxygenases claO, claP, claQ, claU, and claW are close orthologs, suggesting that a redundant function or pseudogenes are present in the cla cluster. These monoxygenases are not involved in clavilactone A biosynthesis nor in its modification. ClaR, ClaS and ClaT are sufficient to produce clavilactone A. The biosynthesis begins with the prenyltransferase claS that transfers geranyl pyrophosphate (GPP) to hydroquinone to produces geranylhydroquinone. The cytochrome P450 monooxygenase claR then catalyzes the diradical coupling reaction between the intramolecular hydroquinone and allyl moieties to form the benzo-fused ten-membered carbocyclic ring unit of wigantol. Finally the cytochrome P450 monooxygenase claT exquisitely and stereoselectively assembles the alpha,beta-epoxy-gamma-lactone moiety, producing clavilactone A via arnebinol A. The protein is Cytochrome P450 monooxygenase claO of Ampulloclitocybe clavipes (Club foot).